Here is a 426-residue protein sequence, read N- to C-terminus: MPRKHSEQLFRQAQKHIPGGVNSPVRAFKSVGGTPVFFHSARGAHLFDEDDNKYIDYVGSWGPMILGHNHPHVVAAVQAAVEQGLSFGAPTATEVAMADKVCELVPSMDMVRMVNSGTEATMSAIRLARGYTGRNKIIKFEGCYHGHVDSLLVKAGSGAIAIPGSPGVPEAVTADTLVLDYNDAASVTQAFKEHGDDIAAVIVEPVAGNMNCVPATENFLQTLRQQCDDNGAVLIFDEVMSGFRVALGGAQGHYGITPDMTTLGKIVGGGMPVGAFGGKQAIMEHLAPLGPVYQAGTLSGNPVAMAAGLATLNLISEPGFHQALAEKTTRLLEGLTAAAHAEGVAFTTAQAGAMFGLFFTDQNRISSFTEVMACDSERFNRFFHAMLDQGIYLAPSAFEAGFVSAAHSNDDIDATITAARKAFGKI.

An N6-(pyridoxal phosphate)lysine modification is found at K265.

It belongs to the class-III pyridoxal-phosphate-dependent aminotransferase family. HemL subfamily. Homodimer. Pyridoxal 5'-phosphate serves as cofactor.

It localises to the cytoplasm. It catalyses the reaction (S)-4-amino-5-oxopentanoate = 5-aminolevulinate. It functions in the pathway porphyrin-containing compound metabolism; protoporphyrin-IX biosynthesis; 5-aminolevulinate from L-glutamyl-tRNA(Glu): step 2/2. In Alcanivorax borkumensis (strain ATCC 700651 / DSM 11573 / NCIMB 13689 / SK2), this protein is Glutamate-1-semialdehyde 2,1-aminomutase.